An 880-amino-acid chain; its full sequence is Alanine--tRNA ligase (880 aa).

Zn(2+)-binding residues include His567, His571, Cys669, and His673.

This sequence belongs to the class-II aminoacyl-tRNA synthetase family. It depends on Zn(2+) as a cofactor.

It localises to the cytoplasm. The enzyme catalyses tRNA(Ala) + L-alanine + ATP = L-alanyl-tRNA(Ala) + AMP + diphosphate. Catalyzes the attachment of alanine to tRNA(Ala) in a two-step reaction: alanine is first activated by ATP to form Ala-AMP and then transferred to the acceptor end of tRNA(Ala). Also edits incorrectly charged Ser-tRNA(Ala) and Gly-tRNA(Ala) via its editing domain. The chain is Alanine--tRNA ligase from Syntrophomonas wolfei subsp. wolfei (strain DSM 2245B / Goettingen).